The chain runs to 115 residues: uncharacterized protein (115 aa).

In terms of domain architecture, CHCH spans 63-108 (GSPCGFEFREAITCQKTNSDGEIEQGACGKELMSFMECVTRTQCFG). Short sequence motifs (cx9C motif) lie at residues 66–76 (CGFEFREAITC) and 90–100 (CGKELMSFMEC). Intrachain disulfides connect cysteine 66/cysteine 100 and cysteine 76/cysteine 90.

This is an uncharacterized protein from Caenorhabditis elegans.